Here is a 290-residue protein sequence, read N- to C-terminus: Large ribosomal subunit protein uL2m (290 aa).

This sequence belongs to the universal ribosomal protein uL2 family. In terms of assembly, probably part of the large ribosomal subunit.

Its subcellular location is the hydrogenosome. The sequence is that of Large ribosomal subunit protein uL2m (rpl2) from Nyctotherus ovalis.